The chain runs to 79 residues: Ferredoxin (79 aa).

2 4Fe-4S ferredoxin-type domains span residues 2-30 (PHVI…YDGG) and 31-60 (DQFY…PEED). [3Fe-4S] cluster-binding residues include C9 and C17. [4Fe-4S] cluster is bound by residues C21, C40, C43, and C46. [3Fe-4S] cluster is bound at residue C50.

The cofactor is [4Fe-4S] cluster. It depends on [3Fe-4S] cluster as a cofactor.

Its function is as follows. Ferredoxins are iron-sulfur proteins that transfer electrons in a wide variety of metabolic reactions. The chain is Ferredoxin from Thermus thermophilus (strain ATCC 27634 / DSM 579 / HB8).